Here is a 352-residue protein sequence, read N- to C-terminus: Glycerol-1-phosphate dehydrogenase [NAD(P)+] (352 aa).

Residues 98–102 (GKAID) and 120–123 (TAAS) each bind NAD(+). Aspartate 125 is a binding site for substrate. An NAD(+)-binding site is contributed by serine 129. Aspartate 172 provides a ligand contact to substrate. Residues aspartate 172 and histidine 252 each coordinate Zn(2+). A substrate-binding site is contributed by histidine 256. Histidine 268 serves as a coordination point for Zn(2+).

This sequence belongs to the glycerol-1-phosphate dehydrogenase family. Zn(2+) serves as cofactor.

The protein localises to the cytoplasm. The enzyme catalyses sn-glycerol 1-phosphate + NAD(+) = dihydroxyacetone phosphate + NADH + H(+). It catalyses the reaction sn-glycerol 1-phosphate + NADP(+) = dihydroxyacetone phosphate + NADPH + H(+). The protein operates within membrane lipid metabolism; glycerophospholipid metabolism. Its function is as follows. Catalyzes the NAD(P)H-dependent reduction of dihydroxyacetonephosphate (DHAP or glycerone phosphate) to glycerol 1-phosphate (G1P). The G1P thus generated is used as the glycerophosphate backbone of phospholipids in the cellular membranes of Archaea. This Halobacterium salinarum (strain ATCC 29341 / DSM 671 / R1) protein is Glycerol-1-phosphate dehydrogenase [NAD(P)+].